Reading from the N-terminus, the 116-residue chain is Putative anti-sigma factor antagonist BtrV (116 aa).

The 110-residue stretch at 1-110 (MKLTMDKIDG…NSREAAAAAF (110 aa)) folds into the STAS domain. Ser55 carries the post-translational modification Phosphoserine; by BtrW.

Belongs to the anti-sigma-factor antagonist family. As to quaternary structure, interacts with BtrW. Post-translationally, phosphorylated by BtrW. Dephosphorylated by BtrU.

Possible positive regulator of sigma-B activity. Non-phosphorylated BtrV binds to BtrW, preventing its association with an unknown partner(s) that might be sigma-B. When phosphorylated, releases BtrW, which is then free to complex with and inactivate its partner. Involved in type III secretion system (T3SS). In Bordetella bronchiseptica (strain ATCC BAA-588 / NCTC 13252 / RB50) (Alcaligenes bronchisepticus), this protein is Putative anti-sigma factor antagonist BtrV (btrV).